Here is a 216-residue protein sequence, read N- to C-terminus: MAALAALRLLHPILAVRSGVGAALQVRGVHSSMAADSPSSTQPAVSQARAVVPKPAALPSSRGEYVVAKLDDLINWARRSSLWPMTFGLACCAVEMMHMAAPRYDMDRFGVVFRASPRQSDVMIVAGTLTNKMAPALRKVYDQMPEPRYVVSMGSCANGGGYYHYSYSVVRGCDRIVPVDIYVPGCPPTAEALLYGILQLQKKIKREKRLRIWYRR.

The N-terminal 37 residues, 1–37 (MAALAALRLLHPILAVRSGVGAALQVRGVHSSMAADS), are a transit peptide targeting the mitochondrion. [4Fe-4S] cluster-binding residues include C91 and C92. At R114 the chain carries Hydroxyarginine. Residues C156 and C186 each contribute to the [4Fe-4S] cluster site.

It belongs to the complex I 20 kDa subunit family. In terms of assembly, core subunit of respiratory chain NADH dehydrogenase (Complex I) which is composed of 45 different subunits. This is a component of the iron-sulfur (IP) fragment of the enzyme. [4Fe-4S] cluster is required as a cofactor. In terms of processing, hydroxylated ar Arg-114 by NDUFAF5 early in the pathway of assembly of complex I, before the formation of the juncture between peripheral and membrane arms.

Its subcellular location is the mitochondrion inner membrane. It catalyses the reaction a ubiquinone + NADH + 5 H(+)(in) = a ubiquinol + NAD(+) + 4 H(+)(out). Its function is as follows. Core subunit of the mitochondrial membrane respiratory chain NADH dehydrogenase (Complex I) which catalyzes electron transfer from NADH through the respiratory chain, using ubiquinone as an electron acceptor. Essential for the catalytic activity of complex I. This is NADH dehydrogenase [ubiquinone] iron-sulfur protein 7, mitochondrial (NDUFS7) from Bos taurus (Bovine).